A 748-amino-acid polypeptide reads, in one-letter code: Acetyl-CoA decarbonylase/synthase complex subunit beta 1 (748 aa).

[Ni-Fe-S] cluster-binding residues include Cys480, Cys483, Cys569, and Cys571.

The protein belongs to the CdhC family. As to quaternary structure, monomer. The ACDS complex is made up of alpha, epsilon, beta, gamma and delta chains with a probable stoichiometry of (alpha(2)epsilon(2))(4)-beta(8)-(gamma(1)delta(1))(8) (Potential). [Ni-Fe-S] cluster is required as a cofactor.

The catalysed reaction is Co(I)-[corrinoid Fe-S protein] + acetyl-CoA + H(+) = methyl-Co(III)-[corrinoid Fe-S protein] + CO + CoA. In terms of biological role, part of a complex that catalyzes the reversible cleavage of acetyl-CoA, allowing autotrophic growth from CO(2). The alpha-epsilon complex generates CO from CO(2), while the beta subunit (this protein) combines the CO with CoA and a methyl group to form acetyl-CoA. The methyl group, which is incorporated into acetyl-CoA, is transferred to the beta subunit by a corrinoid iron-sulfur protein (the gamma-delta complex). The polypeptide is Acetyl-CoA decarbonylase/synthase complex subunit beta 1 (cdhC1) (Methanocaldococcus jannaschii (strain ATCC 43067 / DSM 2661 / JAL-1 / JCM 10045 / NBRC 100440) (Methanococcus jannaschii)).